A 414-amino-acid chain; its full sequence is CCA-adding enzyme (414 aa).

Residues glycine 8 and arginine 11 each contribute to the ATP site. 2 residues coordinate CTP: glycine 8 and arginine 11. Residues aspartate 21 and aspartate 23 each coordinate Mg(2+). Positions 92, 138, and 141 each coordinate ATP. Arginine 92, arginine 138, and arginine 141 together coordinate CTP.

Belongs to the tRNA nucleotidyltransferase/poly(A) polymerase family. Bacterial CCA-adding enzyme type 2 subfamily. Mg(2+) is required as a cofactor.

It carries out the reaction a tRNA precursor + 2 CTP + ATP = a tRNA with a 3' CCA end + 3 diphosphate. The catalysed reaction is a tRNA with a 3' CCA end + 2 CTP + ATP = a tRNA with a 3' CCACCA end + 3 diphosphate. In terms of biological role, catalyzes the addition and repair of the essential 3'-terminal CCA sequence in tRNAs without using a nucleic acid template. Adds these three nucleotides in the order of C, C, and A to the tRNA nucleotide-73, using CTP and ATP as substrates and producing inorganic pyrophosphate. tRNA 3'-terminal CCA addition is required both for tRNA processing and repair. Also involved in tRNA surveillance by mediating tandem CCA addition to generate a CCACCA at the 3' terminus of unstable tRNAs. While stable tRNAs receive only 3'-terminal CCA, unstable tRNAs are marked with CCACCA and rapidly degraded. This chain is CCA-adding enzyme, found in Buchnera aphidicola subsp. Cinara cedri (strain Cc).